A 124-amino-acid polypeptide reads, in one-letter code: Suppressor of RNA silencing (124 aa).

A basic motif (BM) region spans residues 1 to 14 (MPKSEFFREERKRR). The tract at residues 30 to 68 (CGYSCGMPPAVEKVSVPADTEEDVYMLIFPYEQFCGEKH) is C-2. Residues 72 to 124 (YESLKDVSDDELKLRRLERQRETLLASFQQKLKRYDEKIALLSEKFKNLRSKL) adopt a coiled-coil conformation. Ser-79 carries the post-translational modification Phosphoserine.

Belongs to the virgaviridae suppressor of RNA silencing family. Homooligomer. Phosphorylated at Ser-79 by a host PKA-like kinase; the phosphorylation at this site seems to suppress host cell death.

The protein resides in the host chloroplast envelope. It localises to the host endoplasmic reticulum. It is found in the host cell junction. The protein localises to the host plasmodesma. Its function is as follows. Suppressor of RNA-mediated gene silencing, also known as post-transcriptional gene silencing (PTGS), a mechanism of plant viral defense that limits the accumulation of viral RNAs. Promotes viral cell-to-cell long distance movement. The polypeptide is Suppressor of RNA silencing (Peanut clump virus (isolate 87/TGTA2) (PCV)).